A 311-amino-acid polypeptide reads, in one-letter code: Cytosolic Fe-S cluster assembly factor Nubp1 homolog (311 aa).

Residues 1–20 form a disordered region; it reads MQAPPPEHCPGVESENAGKG. 4 residues coordinate [4Fe-4S] cluster: Cys-9, Cys-23, Cys-26, and Cys-32. ATP is bound at residue 63-70; that stretch reads GKGGVGKS. Residues Cys-240 and Cys-243 each coordinate [4Fe-4S] cluster.

The protein belongs to the Mrp/NBP35 ATP-binding proteins family. NUBP1/NBP35 subfamily. In terms of assembly, heterotetramer of 2 Nubp1 and 2 Nubp2 chains. [4Fe-4S] cluster serves as cofactor.

It is found in the cytoplasm. Functionally, component of the cytosolic iron-sulfur (Fe/S) protein assembly (CIA) machinery. Required for maturation of extramitochondrial Fe-S proteins. The Nubp1-Nubp2 heterotetramer forms a Fe-S scaffold complex, mediating the de novo assembly of an Fe-S cluster and its transfer to target apoproteins. In Drosophila simulans (Fruit fly), this protein is Cytosolic Fe-S cluster assembly factor Nubp1 homolog.